Reading from the N-terminus, the 515-residue chain is Probable cytosol aminopeptidase (515 aa).

Mn(2+) contacts are provided by Lys274 and Asp279. Lys286 is a catalytic residue. Residues Asp297, Asp356, and Glu358 each coordinate Mn(2+). The active site involves Arg360.

It belongs to the peptidase M17 family. The cofactor is Mn(2+).

The protein localises to the cytoplasm. The catalysed reaction is Release of an N-terminal amino acid, Xaa-|-Yaa-, in which Xaa is preferably Leu, but may be other amino acids including Pro although not Arg or Lys, and Yaa may be Pro. Amino acid amides and methyl esters are also readily hydrolyzed, but rates on arylamides are exceedingly low.. It catalyses the reaction Release of an N-terminal amino acid, preferentially leucine, but not glutamic or aspartic acids.. Its function is as follows. Presumably involved in the processing and regular turnover of intracellular proteins. Catalyzes the removal of unsubstituted N-terminal amino acids from various peptides. The sequence is that of Probable cytosol aminopeptidase from Desulforapulum autotrophicum (strain ATCC 43914 / DSM 3382 / VKM B-1955 / HRM2) (Desulfobacterium autotrophicum).